The primary structure comprises 257 residues: Protein TONNEAU 1b (257 aa).

Positions 73–105 constitute a LisH domain; sequence SGRLLSALICEYLDWAQLNHTLKVYQPECNSAK. Disordered stretches follow at residues 148–216 and 231–257; these read QVMG…EDMP and LDRK…EGKD. Positions 187 to 199 are enriched in low complexity; that stretch reads SVSASQASGAATS. Basic and acidic residues-rich tracts occupy residues 201–212 and 244–257; these read YRKDESNWRYDT and NVKD…EGKD.

In terms of assembly, interacts with CEN1, LNG1/TRM2 and LNG2/TRM1 (via C-terminus).

Its subcellular location is the cytoplasm. It is found in the cytoskeleton. Involved in the control of the dynamic organization of the cortical cytoskeleton. May play a role in the organization of microtubule arrays at the centrosome through interaction with centrin 1 (CEN1). This is Protein TONNEAU 1b (TON1B) from Arabidopsis thaliana (Mouse-ear cress).